We begin with the raw amino-acid sequence, 91 residues long: Alpha-defensin-related sequence 12 (91 aa).

A signal peptide spans 1–19 (MKKLVLLSAFVLLAFQVQA). A propeptide spanning residues 20–65 (DSIQNTDEEIKTEEQPGEENQAVSISFGDPEGYALQDAAIRRARRC) is cleaved from the precursor. A run of 6 repeats spans residues 65–67 (CPP), 68–70 (CPS), 71–73 (CLS), 74–76 (CPW), 77–79 (CPR), and 83–85 (CPM). The segment at 65 to 88 (CPPCPSCLSCPWCPRCLRCPMCKC) is 6 X 3 AA tandem repeats of C-P-X.

This sequence belongs to the alpha-defensin family. As to expression, paneth cells of the small bowel.

It localises to the secreted. Its function is as follows. Apparent precursor of a secreted, cationic, proline- and cysteine-rich peptide that contains Cys-Pro-Xaa repeats. Unlike cryptdin, the proposed mature peptide region lacks the structural motif characteristic of defensins. It may have microbicidal activities. The sequence is that of Alpha-defensin-related sequence 12 (Defa-rs12) from Mus musculus (Mouse).